Here is a 95-residue protein sequence, read N- to C-terminus: Transcription and mRNA export factor ENY2-2 (95 aa).

This sequence belongs to the ENY2 family. Component of the nuclear pore complex (NPC)-associated TREX-2 complex (transcription and export complex 2). Component of the SAGA transcription coactivator-HAT complex. Within the SAGA complex, participates in a subcomplex of SAGA called the DUB module (deubiquitination module).

Its subcellular location is the nucleus. The protein resides in the nucleoplasm. In terms of biological role, involved in mRNA export coupled transcription activation by association with both the TREX-2 and the SAGA complexes. The transcription regulatory histone acetylation (HAT) complex SAGA is a multiprotein complex that activates transcription by remodeling chromatin and mediating histone acetylation and deubiquitination. Within the SAGA complex, participates in a subcomplex that specifically deubiquitinates histones. The SAGA complex is recruited to specific gene promoters by activators, where it is required for transcription. The TREX-2 complex functions in docking export-competent ribonucleoprotein particles (mRNPs) to the nuclear entrance of the nuclear pore complex (nuclear basket). TREX-2 participates in mRNA export and accurate chromatin positioning in the nucleus by tethering genes to the nuclear periphery. This chain is Transcription and mRNA export factor ENY2-2 (eny2-2), found in Salmo salar (Atlantic salmon).